Reading from the N-terminus, the 677-residue chain is Methionine--tRNA ligase (677 aa).

Residues 15-25 (PYANGSIHLGH) carry the 'HIGH' region motif. Zn(2+)-binding residues include Cys146, Cys149, Cys159, and Cys162. The 'KMSKS' region motif lies at 333 to 337 (KMSKS). Lys336 contacts ATP. The tRNA-binding domain occupies 575–677 (DFAKVDLRVA…DGAKPGQQVK (103 aa)).

Belongs to the class-I aminoacyl-tRNA synthetase family. MetG type 1 subfamily. Homodimer. Zn(2+) serves as cofactor.

The protein localises to the cytoplasm. The catalysed reaction is tRNA(Met) + L-methionine + ATP = L-methionyl-tRNA(Met) + AMP + diphosphate. Its function is as follows. Is required not only for elongation of protein synthesis but also for the initiation of all mRNA translation through initiator tRNA(fMet) aminoacylation. The sequence is that of Methionine--tRNA ligase from Salmonella arizonae (strain ATCC BAA-731 / CDC346-86 / RSK2980).